Consider the following 551-residue polypeptide: uncharacterized protein (551 aa).

Topologically, residues Met1–Val7 are cytoplasmic. Residues Val8 to Ile28 form a helical membrane-spanning segment. Residues Thr29–Lys88 lie on the Vacuolar side of the membrane. A helical transmembrane segment spans residues Ile89–Met109. At Ser110 to Thr135 the chain is on the cytoplasmic side. A helical transmembrane segment spans residues Phe136–Tyr156. Topologically, residues Pro157–Thr160 are vacuolar. A helical membrane pass occupies residues Trp161–Phe181. Residues Ser182 to Arg551 are Cytoplasmic-facing. Phosphoserine occurs at positions 224 and 232. A disordered region spans residues Ala280 to Asn341. The segment covering Thr307–Lys320 has biased composition (polar residues). The span at Asn321–Asn341 shows a compositional bias: low complexity. Ser363 carries the post-translational modification Phosphoserine.

As to quaternary structure, forms homo dimers or homooligomers in MCC microdomains. Interacts with BOI2 and RHO3, two key regulators of secretion.

It localises to the vacuole membrane. It is found in the cell membrane. In terms of biological role, protein involved in secretion and cell wall organization. Contributes to cell surface-related functions as a auxiliary component of MCC/eisosome that specifically interacts with the secretory pathway. This is an uncharacterized protein from Saccharomyces cerevisiae (strain ATCC 204508 / S288c) (Baker's yeast).